The primary structure comprises 395 residues: Chaperone protein DnaJ 2 (395 aa).

Residues 10-75 (NYYADLGVSS…KKRKEYDELK (66 aa)) form the J domain. Residues 165-242 (GTTIPVELTG…CHGRGTVRKS (78 aa)) form a CR-type zinc finger. Zn(2+) is bound by residues Cys-178, Cys-181, Cys-194, Cys-197, Cys-216, Cys-219, Cys-230, and Cys-233. 4 CXXCXGXG motif repeats span residues 178-185 (CNTCHGSG), 194-201 (CGTCDGTG), 216-223 (CATCGGTG), and 230-237 (CDNCHGRG).

The protein belongs to the DnaJ family. As to quaternary structure, homodimer. It depends on Zn(2+) as a cofactor.

The protein localises to the cytoplasm. In terms of biological role, participates actively in the response to hyperosmotic and heat shock by preventing the aggregation of stress-denatured proteins and by disaggregating proteins, also in an autonomous, DnaK-independent fashion. Unfolded proteins bind initially to DnaJ; upon interaction with the DnaJ-bound protein, DnaK hydrolyzes its bound ATP, resulting in the formation of a stable complex. GrpE releases ADP from DnaK; ATP binding to DnaK triggers the release of the substrate protein, thus completing the reaction cycle. Several rounds of ATP-dependent interactions between DnaJ, DnaK and GrpE are required for fully efficient folding. Also involved, together with DnaK and GrpE, in the DNA replication of plasmids through activation of initiation proteins. The protein is Chaperone protein DnaJ 2 of Corynebacterium glutamicum (strain ATCC 13032 / DSM 20300 / JCM 1318 / BCRC 11384 / CCUG 27702 / LMG 3730 / NBRC 12168 / NCIMB 10025 / NRRL B-2784 / 534).